The following is a 218-amino-acid chain: Esterase FPY3 (218 aa).

Catalysis depends on charge relay system residues Ser95, Asp163, and His190.

It belongs to the LovG family.

It participates in secondary metabolite biosynthesis. Its function is as follows. Esterase; part of the gene cluster that mediates the biosynthesis of the gamma-pyrones fusapyrone (FPY) and deoxyfusapyrone (dFPY). FPY is an undecaketide and thus likely synthesized by the polyketide synthase FPY1 from acetyl-CoA functioning as starter unit and the addition of 10 malonyl-CoA extender units by successive Claisen-condensations. Next to this, FPY shares some rare features: C-glycosylated 4-deoxyglucose at C-3, a gem-dimethyl group at C-13, and an alpha-beta to beta-gamma double bond shift at C-20. During FPY biosynthesis mono-C-methyl groups are transferred to the tetra-, penta-, hexa- and heptaketide, while two C-methyl groups are transferred to the nonaketide, suggesting that the CMet domain is programmed to selectively catalyze two successive C-alpha-methylation reactions of the nonaketide, while other alpha-carbons are non- or mono-methylated only. While the origin of the 4'-deoxyglucose moiety remains opaque, its transfer to C-3 is most likely mediated by the C-glycosyltransferase FPY2. Next to this, the hydroxyl group present at C-33 and discriminating between FPY and dFPY, is likely to be installed by the cytochrome P450 monooxygenase FPY7. No putative function can be predicted for the remaining genes FPY3-FPY6. The sequence is that of Esterase FPY3 from Fusarium mangiferae (Mango malformation disease fungus).